We begin with the raw amino-acid sequence, 305 residues long: Large ribosomal subunit protein uL3c (305 aa).

The N-terminal 84 residues, 1-84 (MAAILPTFSI…AVGGLEIKMM (84 aa)), are a transit peptide targeting the chloroplast. The disordered stretch occupies residues 228–256 (SHRALGSIGAGTTPGHVYKGKKMPGRMGG).

As to quaternary structure, component of the chloroplast large ribosomal subunit (LSU). Mature 70S chloroplast ribosomes of higher plants consist of a small (30S) and a large (50S) subunit. The 30S small subunit contains 1 molecule of ribosomal RNA (16S rRNA) and 24 different proteins. The 50S large subunit contains 3 rRNA molecules (23S, 5S and 4.5S rRNA) and 33 different proteins.

It localises to the plastid. The protein localises to the chloroplast. Its function is as follows. Component of the chloroplast ribosome (chloro-ribosome), a dedicated translation machinery responsible for the synthesis of chloroplast genome-encoded proteins, including proteins of the transcription and translation machinery and components of the photosynthetic apparatus. The chain is Large ribosomal subunit protein uL3c (RPL3) from Spinacia oleracea (Spinach).